A 609-amino-acid polypeptide reads, in one-letter code: MAPGGLLTLAGAAAASTAAAAYLDAKLHLTKDLNQLARAERGAQNFARAVEQRKASGFFLFEAAAARLGDAPCIWSRGHPEYSWTQTYQRACQYGHYFRDLGVVAGQHVGVYLYNSPELMFIWMGLLSIGAAPALINYNLGSDALVHCVRLSRSRFLIYDDASDCSSRIHEVGERLRDINVEAIMLSGSGTTGLPKAAPITVARNYPSASLLPKTFGQKPGPNGDRTYYCIPLYHGTGGIAAMNDLMSGISIALAPKFSLSRFWDDCIESGSTIFVYVGELIRYLLSAPASPKDRQHRVRLVWGNGLSPELWTKFQDRFGVSDIGEFYASTEGVLTLLKHYRGGGFGLGAVGHHGWLLRRKFHNDYVPVRIDPETGDIWRSPKTGFAERLPYERGGEILARLPSRSAWAGYWHAEEATQKKLVENVFEKGDLYFRTGDALRRDADGHWYFLDRLGDTYRWKGENVSTTEVGQVLGSHADIAEANVYGVQVPNHDGRAGCAAIALKNAATPDTLDWSRLTSLLRSELPSYAVPVFIRVRETVGGMSTDNHKHNKVPLRDEGVDPRSMGSKVPGSEKDRFFWLPAGASKYVPFTERDWDLLSGQSAARPRL.

An AMP-binding site is contributed by 185 to 196 (MLSGSGTTGLPK). Residues 545–570 (STDNHKHNKVPLRDEGVDPRSMGSKV) are disordered.

Belongs to the ATP-dependent AMP-binding enzyme family.

The catalysed reaction is isopenicillin N = penicillin N. The protein operates within antibiotic biosynthesis; cephalosporin C biosynthesis. In terms of biological role, together with cefD2, catalyzes the reversible isomerization between isopenicillin N and penicillin N. This two-component IPN epimerase system may function by two sequential steps, an activation of isopenicillin N by the acyl-CoA synthase component cefD1, followed by epimerization by the acyl-CoA racemase component cefD2. The polypeptide is Isopenicillin N epimerase component 1 (cefD1) (Hapsidospora chrysogena (Acremonium chrysogenum)).